Here is a 224-residue protein sequence, read N- to C-terminus: MEYSDKQIAAQEAVRYIKDGMVIGIGSGSTVNEFLYCLAARMRKERLQVVGIPASKKSERLATELGIPLTTFATYQNVDIAIDGTDEIDDQLYLVKGGGGSLVREKMIDLVAETFIVIASGKKKIKKLGSFPVPVEVVPFGWQATEQRLQQFGCQTNLRMVEEDIFVSDNQNYIIDCDFKEIDDAEALHRSLKQIVGVIETGIFINMVDKAIVADNGELSILEK.

Substrate is bound by residues 27–30 (SGST), 83–86 (DGTD), and 96–99 (KGGG). The Proton acceptor role is filled by glutamate 105. Lysine 123 contributes to the substrate binding site.

The protein belongs to the ribose 5-phosphate isomerase family. Homodimer.

It catalyses the reaction aldehydo-D-ribose 5-phosphate = D-ribulose 5-phosphate. Its pathway is carbohydrate degradation; pentose phosphate pathway; D-ribose 5-phosphate from D-ribulose 5-phosphate (non-oxidative stage): step 1/1. Its function is as follows. Catalyzes the reversible conversion of ribose-5-phosphate to ribulose 5-phosphate. This Oceanobacillus iheyensis (strain DSM 14371 / CIP 107618 / JCM 11309 / KCTC 3954 / HTE831) protein is Ribose-5-phosphate isomerase A 2.